The following is a 110-amino-acid chain: Large ribosomal subunit protein uL22 (110 aa).

The protein belongs to the universal ribosomal protein uL22 family. As to quaternary structure, part of the 50S ribosomal subunit.

This protein binds specifically to 23S rRNA; its binding is stimulated by other ribosomal proteins, e.g. L4, L17, and L20. It is important during the early stages of 50S assembly. It makes multiple contacts with different domains of the 23S rRNA in the assembled 50S subunit and ribosome. In terms of biological role, the globular domain of the protein is located near the polypeptide exit tunnel on the outside of the subunit, while an extended beta-hairpin is found that lines the wall of the exit tunnel in the center of the 70S ribosome. The sequence is that of Large ribosomal subunit protein uL22 from Colwellia psychrerythraea (strain 34H / ATCC BAA-681) (Vibrio psychroerythus).